The chain runs to 218 residues: Adenylate kinase (218 aa).

An ATP-binding site is contributed by 10–15 (GAGKGT). Positions 30–59 (STGNMLRAAVKAGTPLGLEAKKVMDAGGLV) are NMP. AMP is bound by residues Thr31, Arg36, 57-59 (GLV), 85-88 (GFPR), and Gln92. Residues 122–159 (GRRVHPASGRSYHVRFNPPKAEGVDDVTGEPLVQRDDD) are LID. ATP is bound by residues Arg123 and 132-133 (SY). Residues Arg156 and Arg167 each contribute to the AMP site. Gly203 contacts ATP.

Belongs to the adenylate kinase family. Monomer.

The protein resides in the cytoplasm. It catalyses the reaction AMP + ATP = 2 ADP. Its pathway is purine metabolism; AMP biosynthesis via salvage pathway; AMP from ADP: step 1/1. Its function is as follows. Catalyzes the reversible transfer of the terminal phosphate group between ATP and AMP. Plays an important role in cellular energy homeostasis and in adenine nucleotide metabolism. The chain is Adenylate kinase from Bordetella parapertussis (strain 12822 / ATCC BAA-587 / NCTC 13253).